A 389-amino-acid chain; its full sequence is 8-amino-7-oxononanoate synthase (389 aa).

Arg-31 is a substrate binding site. 109–110 (GY) is a pyridoxal 5'-phosphate binding site. His-134 contributes to the substrate binding site. Residues Ser-180, 205–208 (DEAH), and 236–239 (TLSK) each bind pyridoxal 5'-phosphate. Lys-239 is subject to N6-(pyridoxal phosphate)lysine. A substrate-binding site is contributed by Thr-349.

The protein belongs to the class-II pyridoxal-phosphate-dependent aminotransferase family. BioF subfamily. In terms of assembly, homodimer. It depends on pyridoxal 5'-phosphate as a cofactor.

The catalysed reaction is 6-carboxyhexanoyl-[ACP] + L-alanine + H(+) = (8S)-8-amino-7-oxononanoate + holo-[ACP] + CO2. Its pathway is cofactor biosynthesis; biotin biosynthesis. Its function is as follows. Catalyzes the decarboxylative condensation of pimeloyl-[acyl-carrier protein] and L-alanine to produce 8-amino-7-oxononanoate (AON), [acyl-carrier protein], and carbon dioxide. In Mycobacterium marinum (strain ATCC BAA-535 / M), this protein is 8-amino-7-oxononanoate synthase.